Consider the following 504-residue polypeptide: Maturase K (504 aa).

Belongs to the intron maturase 2 family. MatK subfamily.

The protein localises to the plastid. It localises to the chloroplast. Its function is as follows. Usually encoded in the trnK tRNA gene intron. Probably assists in splicing its own and other chloroplast group II introns. This is Maturase K from Nepenthes distillatoria (Pitcher plant).